A 118-amino-acid chain; its full sequence is Actin depolymerizing factor ADF (118 aa).

Positions 4–118 (GMGVDENCVA…HEMGDLAPLA (115 aa)) constitute an ADF-H domain.

The protein belongs to the actin-binding proteins ADF family. As to quaternary structure, interacts with ACT1 (G-actin); the interaction results in inhibition of actin polymerization. Interacts with DPA; the interaction enhances ADF activity in disassembly of filamentous actin and inhibition of actin polymerization.

The protein resides in the cytoplasm. Its function is as follows. Inhibits actin polymerization. Promotes actin depolymerization. Strongly sequesters actin monomers (G-actin). Weakly severs actin filaments (F-actin). The sequence is that of Actin depolymerizing factor ADF from Toxoplasma gondii.